The chain runs to 296 residues: Nucleotide-binding protein str0831 (296 aa).

13–20 contributes to the ATP binding site; that stretch reads GMSGAGKT. 63-66 contributes to the GTP binding site; the sequence is DMRS.

The protein belongs to the RapZ-like family.

Functionally, displays ATPase and GTPase activities. This is Nucleotide-binding protein str0831 from Streptococcus thermophilus (strain CNRZ 1066).